Here is a 190-residue protein sequence, read N- to C-terminus: Recombination protein RecR (190 aa).

The C4-type zinc finger occupies 58-73 (CEQCGALSENELCEIC). The region spanning 81–167 (NILCIVESPK…TFSKIAQGIP (87 aa)) is the Toprim domain.

The protein belongs to the RecR family.

Its function is as follows. May play a role in DNA repair. It seems to be involved in an RecBC-independent recombinational process of DNA repair. It may act with RecF and RecO. The protein is Recombination protein RecR of Campylobacter jejuni (strain RM1221).